A 108-amino-acid polypeptide reads, in one-letter code: U-scoloptoxin(16)-Sm1a (108 aa).

Positions 1–19 are cleaved as a signal peptide; the sequence is MNLFLVLFVFSFSVSQFFA.

The protein belongs to the scoloptoxin-16 family. Post-translationally, contains 4 disulfide bonds. Expressed by the venom gland.

The protein resides in the secreted. In Scolopendra morsitans (Tanzanian blue ringleg centipede), this protein is U-scoloptoxin(16)-Sm1a.